The following is a 675-amino-acid chain: Polyphosphate kinase (675 aa).

Asparagine 42 contacts ATP. Residues arginine 372 and arginine 401 each contribute to the Mg(2+) site. Histidine 431 functions as the Phosphohistidine intermediate in the catalytic mechanism. 3 residues coordinate ATP: tyrosine 464, arginine 558, and histidine 586.

The protein belongs to the polyphosphate kinase 1 (PPK1) family. Requires Mg(2+) as cofactor. In terms of processing, an intermediate of this reaction is the autophosphorylated ppk in which a phosphate is covalently linked to a histidine residue through a N-P bond.

It carries out the reaction [phosphate](n) + ATP = [phosphate](n+1) + ADP. Catalyzes the reversible transfer of the terminal phosphate of ATP to form a long-chain polyphosphate (polyP). This is Polyphosphate kinase from Helicobacter pylori (strain J99 / ATCC 700824) (Campylobacter pylori J99).